Reading from the N-terminus, the 556-residue chain is Urocanate hydratase (556 aa).

NAD(+) is bound by residues 52–53 (GG), Gln-130, 176–178 (GMG), Glu-196, Arg-201, 242–243 (NA), 263–267 (QTSAH), 273–274 (YL), and Tyr-322. The active site involves Cys-410. NAD(+) is bound at residue Gly-492.

This sequence belongs to the urocanase family. NAD(+) is required as a cofactor.

It localises to the cytoplasm. The enzyme catalyses 4-imidazolone-5-propanoate = trans-urocanate + H2O. Its pathway is amino-acid degradation; L-histidine degradation into L-glutamate; N-formimidoyl-L-glutamate from L-histidine: step 2/3. Catalyzes the conversion of urocanate to 4-imidazolone-5-propionate. The chain is Urocanate hydratase from Shewanella woodyi (strain ATCC 51908 / MS32).